A 444-amino-acid chain; its full sequence is Probable glycine dehydrogenase (decarboxylating) subunit 1 (444 aa).

It belongs to the GcvP family. N-terminal subunit subfamily. The glycine cleavage system is composed of four proteins: P, T, L and H. In this organism, the P 'protein' is a heterodimer of two subunits.

It carries out the reaction N(6)-[(R)-lipoyl]-L-lysyl-[glycine-cleavage complex H protein] + glycine + H(+) = N(6)-[(R)-S(8)-aminomethyldihydrolipoyl]-L-lysyl-[glycine-cleavage complex H protein] + CO2. In terms of biological role, the glycine cleavage system catalyzes the degradation of glycine. The P protein binds the alpha-amino group of glycine through its pyridoxal phosphate cofactor; CO(2) is released and the remaining methylamine moiety is then transferred to the lipoamide cofactor of the H protein. This chain is Probable glycine dehydrogenase (decarboxylating) subunit 1, found in Moorella thermoacetica (strain ATCC 39073 / JCM 9320).